The chain runs to 153 residues: Hemoglobin-3 (153 aa).

The residue at position 2 (serine 2) is an N-acetylserine. The Globin domain occupies 4-150 (GLTGPQKAAL…ICRVQGDFMK (147 aa)). Histidine 99 provides a ligand contact to heme b.

This sequence belongs to the globin family. Homotetramer.

The protein resides in the cytoplasm. This is Hemoglobin-3 from Phacoides pectinatus (Thick lucine).